Consider the following 638-residue polypeptide: 1-deoxy-D-xylulose-5-phosphate synthase (638 aa).

Thiamine diphosphate is bound by residues H78 and A119–S121. D150 provides a ligand contact to Mg(2+). Residues G151–S152, N179, Y288, and E370 contribute to the thiamine diphosphate site. Residue N179 participates in Mg(2+) binding.

Belongs to the transketolase family. DXPS subfamily. In terms of assembly, homodimer. Mg(2+) serves as cofactor. It depends on thiamine diphosphate as a cofactor.

It catalyses the reaction D-glyceraldehyde 3-phosphate + pyruvate + H(+) = 1-deoxy-D-xylulose 5-phosphate + CO2. It participates in metabolic intermediate biosynthesis; 1-deoxy-D-xylulose 5-phosphate biosynthesis; 1-deoxy-D-xylulose 5-phosphate from D-glyceraldehyde 3-phosphate and pyruvate: step 1/1. Functionally, catalyzes the acyloin condensation reaction between C atoms 2 and 3 of pyruvate and glyceraldehyde 3-phosphate to yield 1-deoxy-D-xylulose-5-phosphate (DXP). This Brucella anthropi (strain ATCC 49188 / DSM 6882 / CCUG 24695 / JCM 21032 / LMG 3331 / NBRC 15819 / NCTC 12168 / Alc 37) (Ochrobactrum anthropi) protein is 1-deoxy-D-xylulose-5-phosphate synthase.